The primary structure comprises 203 residues: E3 ubiquitin-protein ligase RNF152 (203 aa).

The segment at 12-55 adopts an RING-type zinc-finger fold; it reads CQICFNYYSPRRRPKLLDCKHTCCSVCLQQMRTSQKDVRCPWCR. Residues 106–165 are necessary for interaction with RRAGA; the sequence is ISKERALLPGDMGCRLLPGSQQKSVTVVTIPAEQQPLQGGAPQEAVEEEQDRRGVVKSST. The chain crosses the membrane as a helical span at residues 167 to 187; the sequence is SGVCTVILVACVLVFLLGIVL.

The protein belongs to the RNF152 family. Interacts with RRAGA (inactive GDP-bound form); stimulated by amino acid starvation. Interacts with SEC16A. Post-translationally, ubiquitinated. Autoubiquitinated in vitro, leading to its degradation by the proteasome. In terms of tissue distribution, widely expressed.

It localises to the lysosome membrane. The catalysed reaction is S-ubiquitinyl-[E2 ubiquitin-conjugating enzyme]-L-cysteine + [acceptor protein]-L-lysine = [E2 ubiquitin-conjugating enzyme]-L-cysteine + N(6)-ubiquitinyl-[acceptor protein]-L-lysine.. It functions in the pathway protein modification; protein ubiquitination. Functionally, E3 ubiquitin-protein ligase that acts as a negative regulator of mTORC1 signaling by mediating ubiquitination of RagA/RRAGA and RHEB. Catalyzes 'Lys-63'-linked polyubiquitination of RagA/RRAGA in response to amino acid starvation, thereby regulating mTORC1 signaling. Also mediates monoubiquitination of RHEB, promoting its association with the TSC-TBC complex and subsequent inhibition. Also mediates 'Lys-48'-linked polyubiquitination of target proteins and their subsequent targeting to the proteasome for degradation. Induces apoptosis when overexpressed. The sequence is that of E3 ubiquitin-protein ligase RNF152 from Homo sapiens (Human).